A 274-amino-acid polypeptide reads, in one-letter code: Ribose-5-phosphate isomerase (274 aa).

The protein belongs to the ribose 5-phosphate isomerase family.

It is found in the cytoplasm. It catalyses the reaction aldehydo-D-ribose 5-phosphate = D-ribulose 5-phosphate. It functions in the pathway carbohydrate degradation; pentose phosphate pathway; D-ribose 5-phosphate from D-ribulose 5-phosphate (non-oxidative stage): step 1/1. This chain is Ribose-5-phosphate isomerase (rki1), found in Schizosaccharomyces pombe (strain 972 / ATCC 24843) (Fission yeast).